The primary structure comprises 147 residues: D-aminoacyl-tRNA deacylase (147 aa).

Residues Gly136–Pro137 carry the Gly-cisPro motif, important for rejection of L-amino acids motif.

It belongs to the DTD family. In terms of assembly, homodimer.

Its subcellular location is the cytoplasm. It catalyses the reaction glycyl-tRNA(Ala) + H2O = tRNA(Ala) + glycine + H(+). The enzyme catalyses a D-aminoacyl-tRNA + H2O = a tRNA + a D-alpha-amino acid + H(+). In terms of biological role, an aminoacyl-tRNA editing enzyme that deacylates mischarged D-aminoacyl-tRNAs. Also deacylates mischarged glycyl-tRNA(Ala), protecting cells against glycine mischarging by AlaRS. Acts via tRNA-based rather than protein-based catalysis; rejects L-amino acids rather than detecting D-amino acids in the active site. By recycling D-aminoacyl-tRNA to D-amino acids and free tRNA molecules, this enzyme counteracts the toxicity associated with the formation of D-aminoacyl-tRNA entities in vivo and helps enforce protein L-homochirality. The polypeptide is D-aminoacyl-tRNA deacylase (Streptococcus pyogenes serotype M1).